Here is a 230-residue protein sequence, read N- to C-terminus: MKVLAIKLVDYREWTERLGYDREWLIQKIQNKFMMKIHEIASQYSTFPLQLRFDNLLMIVDGITNTQLIYMINDMQENLPVGIKTCLGYGKTPLEAQWNASVCLNNKEDKFKEYVDEKIAALHFDINFNTEALKYTSVYDSFLEITNIYVDLSRFLYKIGGILQYLGGDNYLGFVSTNSVNKVIEKFSDDNKIKVGIGIGQNARTAIKLATTSLEKIRNNREKTWHIEEE.

Belongs to the archaeal-type GTP cyclohydrolase family.

The catalysed reaction is GTP + 3 H2O = 2-amino-5-formylamino-6-(5-phospho-D-ribosylamino)pyrimidin-4(3H)-one + 2 phosphate + 2 H(+). In terms of biological role, catalyzes the formation of 2-amino-5-formylamino-6-ribofuranosylamino-4(3H)-pyrimidinone ribonucleotide monophosphate and inorganic phosphate from GTP. Also has an independent pyrophosphate phosphohydrolase activity. This is GTP cyclohydrolase III from Saccharolobus islandicus (strain M.16.27) (Sulfolobus islandicus).